Reading from the N-terminus, the 380-residue chain is MAKRDYYETLGVAKNASEEDIKKAYRKLAMKHHPDRNQGDGAKKAEESFKEAKEAYEMLSDAQKRAAYDQYGHAGVDPNMGGRGAGGPEAYGGFAEAFGDIFGDIFGQNGQRRGPGGQQVYRGNDLSYAMEITLEEAARGKDTQIRIPSWDSCSTCDGTGAKPGTSAKTCPTCSGSGQVHLRQGFFSIQQTCPSCHGTGKIIPEPCTACNGAGRIKSNKTLEVKIPAGINEGMRIRSAGNGEPGTNGGPAGDLYIEIRIKAHDIFERDGDDLHCTIPIGIATATLGGAIEVPTLGGKAEIELPEGTQHGKTFRLRGKGIKGVRSSYPGDLYCHVAVETPIKLTEHQRKLLRELDESLKKGGERHSPNAKSWTDRVKDLFK.

The J domain occupies 5 to 72 (DYYETLGVAK…QKRAAYDQYG (68 aa)). The segment at 140–218 (GKDTQIRIPS…CNGAGRIKSN (79 aa)) adopts a CR-type zinc-finger fold. The Zn(2+) site is built by C153, C156, C170, C173, C192, C195, C206, and C209. CXXCXGXG motif repeat units follow at residues 153–160 (CSTCDGTG), 170–177 (CPTCSGSG), 192–199 (CPSCHGTG), and 206–213 (CTACNGAG). The disordered stretch occupies residues 357 to 380 (LKKGGERHSPNAKSWTDRVKDLFK).

This sequence belongs to the DnaJ family. As to quaternary structure, homodimer. Zn(2+) is required as a cofactor.

The protein localises to the cytoplasm. Functionally, participates actively in the response to hyperosmotic and heat shock by preventing the aggregation of stress-denatured proteins and by disaggregating proteins, also in an autonomous, DnaK-independent fashion. Unfolded proteins bind initially to DnaJ; upon interaction with the DnaJ-bound protein, DnaK hydrolyzes its bound ATP, resulting in the formation of a stable complex. GrpE releases ADP from DnaK; ATP binding to DnaK triggers the release of the substrate protein, thus completing the reaction cycle. Several rounds of ATP-dependent interactions between DnaJ, DnaK and GrpE are required for fully efficient folding. Also involved, together with DnaK and GrpE, in the DNA replication of plasmids through activation of initiation proteins. This is Chaperone protein DnaJ from Methylibium petroleiphilum (strain ATCC BAA-1232 / LMG 22953 / PM1).